Reading from the N-terminus, the 456-residue chain is Kynurenine 3-monooxygenase (456 aa).

This sequence belongs to the aromatic-ring hydroxylase family. KMO subfamily. The cofactor is FAD.

The catalysed reaction is L-kynurenine + NADPH + O2 + H(+) = 3-hydroxy-L-kynurenine + NADP(+) + H2O. It participates in cofactor biosynthesis; NAD(+) biosynthesis; quinolinate from L-kynurenine: step 1/3. Functionally, catalyzes the hydroxylation of L-kynurenine (L-Kyn) to form 3-hydroxy-L-kynurenine (L-3OHKyn). Required for synthesis of quinolinic acid. The chain is Kynurenine 3-monooxygenase from Xanthomonas campestris pv. campestris (strain 8004).